We begin with the raw amino-acid sequence, 1184 residues long: DNA-directed RNA polymerase subunit beta' (1184 aa).

Cys-60, Cys-62, Cys-75, and Cys-78 together coordinate Zn(2+). Mg(2+) contacts are provided by Asp-449, Asp-451, and Asp-453. 4 residues coordinate Zn(2+): Cys-794, Cys-867, Cys-874, and Cys-877.

It belongs to the RNA polymerase beta' chain family. The RNAP catalytic core consists of 2 alpha, 1 beta, 1 beta' and 1 omega subunit. When a sigma factor is associated with the core the holoenzyme is formed, which can initiate transcription. It depends on Mg(2+) as a cofactor. Requires Zn(2+) as cofactor.

It catalyses the reaction RNA(n) + a ribonucleoside 5'-triphosphate = RNA(n+1) + diphosphate. Functionally, DNA-dependent RNA polymerase catalyzes the transcription of DNA into RNA using the four ribonucleoside triphosphates as substrates. The chain is DNA-directed RNA polymerase subunit beta' from Thermoanaerobacter sp. (strain X514).